The following is a 369-amino-acid chain: Bi-functional coumaroyl CoA and feruloyl CoA ortho-hydroxylase Diox1 (369 aa).

Positions 209–319 constitute a Fe2OG dioxygenase domain; that stretch reads IREPMLVGSR…RISVPLFVNP (111 aa). Y225 contacts 2-oxoglutarate. The Fe cation site is built by H240, D242, and H300. Residues R310 and S312 each contribute to the 2-oxoglutarate site.

The protein belongs to the iron/ascorbate-dependent oxidoreductase family. L-ascorbate is required as a cofactor. Requires Fe(2+) as cofactor.

The catalysed reaction is (E)-4-coumaroyl-CoA + 2-oxoglutarate + O2 = (E)-2,4-dihydroxycinnamoyl-CoA + succinate + CO2. It carries out the reaction (E)-feruloyl-CoA + 2-oxoglutarate + O2 = (E)-6-hydroxyferuloyl-CoA + succinate + CO2. It functions in the pathway phenylpropanoid metabolism. 2-oxoglutarate (OG)- and Fe(II)-dependent dioxygenase (2OGD) involved in scopoletin and umbelliferone biosynthesis. Converts feruloyl CoA into 6'-hydroxyferuloyl CoA, and p-coumaroyl CoA into 2,4-dihydroxycinnamoyl-CoA. This is Bi-functional coumaroyl CoA and feruloyl CoA ortho-hydroxylase Diox1 from Ruta graveolens (Common rue).